Here is a 598-residue protein sequence, read N- to C-terminus: Arginine--tRNA ligase (598 aa).

A 'HIGH' region motif is present at residues 131–141 (ANPTGPMHVGH). The disordered stretch occupies residues 288-308 (KLPPPKSKKGQPPAQPQPDEE).

The protein belongs to the class-I aminoacyl-tRNA synthetase family. In terms of assembly, monomer.

It is found in the cytoplasm. The enzyme catalyses tRNA(Arg) + L-arginine + ATP = L-arginyl-tRNA(Arg) + AMP + diphosphate. This chain is Arginine--tRNA ligase, found in Anaeromyxobacter sp. (strain K).